The following is a 100-amino-acid chain: Small ribosomal subunit protein uS14c (100 aa).

It belongs to the universal ribosomal protein uS14 family. As to quaternary structure, part of the 30S ribosomal subunit.

Its subcellular location is the plastid. Functionally, binds 16S rRNA, required for the assembly of 30S particles. This is Small ribosomal subunit protein uS14c from Euglena longa (Euglenophycean alga).